Consider the following 455-residue polypeptide: Probable carboxypeptidase MCYG_07204 (455 aa).

The signal sequence occupies residues 1 to 21; that stretch reads MQKTYLLALLVSSLASVRSLA. N93 is a glycosylation site (N-linked (GlcNAc...) asparagine). Residue D170 coordinates Zn(2+). E202 serves as the catalytic Proton acceptor. Position 203 (E203) interacts with Zn(2+). Residue N390 is glycosylated (N-linked (GlcNAc...) asparagine).

It belongs to the peptidase M20A family. It depends on Zn(2+) as a cofactor.

It localises to the secreted. The protein is Probable carboxypeptidase MCYG_07204 of Arthroderma otae (strain ATCC MYA-4605 / CBS 113480) (Microsporum canis).